Here is a 132-residue protein sequence, read N- to C-terminus: Transcription antitermination protein NusB (132 aa).

The protein belongs to the NusB family.

Its function is as follows. Involved in transcription antitermination. Required for transcription of ribosomal RNA (rRNA) genes. Binds specifically to the boxA antiterminator sequence of the ribosomal RNA (rrn) operons. The sequence is that of Transcription antitermination protein NusB from Lachnoclostridium phytofermentans (strain ATCC 700394 / DSM 18823 / ISDg) (Clostridium phytofermentans).